Consider the following 446-residue polypeptide: Sensor-type histidine kinase PrrB (446 aa).

2 consecutive transmembrane segments (helical) span residues 19 to 39 (VVATAIGAAIPVLIVGTVVWV) and 151 to 171 (LLICTFAIGAAAVFAWLLAAF). Positions 172 to 222 (AVRPFKQLAEQTRSIDAGDEAPRVEVHGASEAIEIAEAMRGMLQRIWNEQN) constitute an HAMP domain. One can recognise a Histidine kinase domain in the interval 237–446 (VSSHELRTPL…RLVLRLPGPS (210 aa)). A Phosphohistidine; by autocatalysis modification is found at His240.

Post-translationally, autophosphorylated.

The protein resides in the cell membrane. It carries out the reaction ATP + protein L-histidine = ADP + protein N-phospho-L-histidine.. Member of the two-component regulatory system PrrB/PrrA that is involved specifically in early intracellular multiplication of Mycobacterium and is essential for its viability. Functions as a sensor protein kinase which is autophosphorylated at a histidine residue and transfers its phosphate group to the conserved aspartic acid residue in the regulatory domain of PrrA. In turn, PrrA binds to the upstream promoter regions of target genes including itself to positively regulate their expression. In Mycobacterium bovis (strain ATCC BAA-935 / AF2122/97), this protein is Sensor-type histidine kinase PrrB (prrB).